The sequence spans 146 residues: NADPH-dependent 7-cyano-7-deazaguanine reductase (146 aa).

The active-site Thioimide intermediate is the Cys-48. Residue Asp-55 is the Proton donor of the active site. Residues 70–72 (VES) and 89–90 (HE) each bind substrate.

The protein belongs to the GTP cyclohydrolase I family. QueF type 1 subfamily.

It localises to the cytoplasm. The catalysed reaction is 7-aminomethyl-7-carbaguanine + 2 NADP(+) = 7-cyano-7-deazaguanine + 2 NADPH + 3 H(+). Its pathway is tRNA modification; tRNA-queuosine biosynthesis. Catalyzes the NADPH-dependent reduction of 7-cyano-7-deazaguanine (preQ0) to 7-aminomethyl-7-deazaguanine (preQ1). The chain is NADPH-dependent 7-cyano-7-deazaguanine reductase from Helicobacter pylori (strain Shi470).